The chain runs to 498 residues: MASQGTKRSYEQMETGGERQNATEIRASVGRMIGGIGRFYIQMCTELKLSDYEGRLIQNSITIERMVLSAFDERRNKYLEEHPSAGKDPKKTGGPIYRKIDGKWMRELILYDKEEIRRIWRQANNGEDATAGLTHIMIWHSNLNDATYQRTRALVRTGMDPRMCSLMQGSTLPRRSGAAGAAVKGVGTMVMELIRMIKRGINDRNFWRGENGRRTRIAYERMCNILKGKFQTAAQRAMMDQVRESRNPGNAEIEDLIFLARSALILRGSVAHKSCLPTCVYGLAVASGHDFEREGYSLVGIDPFRLLQNSQIFSLIRPNENPAHKSQLVWMACHSAAFEDLRVSSFIRGKRVVPRGQLSTRGVQIASNENMETMDSSTLELRSRYWAIRTRSGGNTNQQRASAGQISVQPTFSVQRNLPFERATVMAAFIGNTEGRTSDMRTEIIRMMESAKPEDVSFQGRGVFELSDEKATSPIVPSFDMSNEGSYFFGDNAEEYDN.

The Unconventional nuclear localization signal signature appears at 1–18 (MASQGTKRSYEQMETGGE). Positions 1 to 21 (MASQGTKRSYEQMETGGERQN) are disordered. Positions 198–216 (KRGINDRNFWRGENGRRTR) match the Bipartite nuclear localization signal motif.

Belongs to the influenza viruses nucleoprotein family. Homomultimerizes to form the nucleocapsid. May bind host exportin-1/XPO1. Binds to viral genomic RNA. Protein-RNA contacts are mediated by a combination of electrostatic interactions between positively charged residues and the phosphate backbone and planar interactions between aromatic side chains and bases. Late in virus-infected cells, may be cleaved from a 56-kDa protein to a 53-kDa protein by a cellular caspase. This cleavage might be a marker for the onset of apoptosis in infected cells or have a specific function in virus host interaction.

Its subcellular location is the virion. It is found in the host nucleus. Its function is as follows. Encapsidates the negative strand viral RNA, protecting it from nucleases. The encapsidated genomic RNA is termed the ribonucleoprotein (RNP) and serves as template for transcription and replication. The RNP needs to be localized in the host nucleus to start an infectious cycle, but is too large to diffuse through the nuclear pore complex. NP comprises at least 2 nuclear localization signals that are responsible for the active RNP import into the nucleus through cellular importin alpha/beta pathway. Later in the infection, nclear export of RNPs are mediated through viral proteins NEP interacting with M1 which binds nucleoproteins. It is possible that nucleoprotein binds directly host exportin-1/XPO1 and plays an active role in RNPs nuclear export. M1 interaction with RNP seems to hide nucleoprotein's nuclear localization signals. Soon after a virion infects a new cell, M1 dissociates from the RNP under acidification of the virion driven by M2 protein. Dissociation of M1 from RNP unmasks nucleoprotein's nuclear localization signals, targeting the RNP to the nucleus. In Aves (Human), this protein is Nucleoprotein.